The following is a 170-amino-acid chain: uncharacterized protein (170 aa).

Residues 35 to 57 (EEVMPATAPSTDPAVPKDAQEAD) form a disordered region.

This is an uncharacterized protein from Candida tsukubaensis (Yeast).